Here is a 449-residue protein sequence, read N- to C-terminus: Putative F-box/FBD/LRR-repeat protein At5g62970 (449 aa).

The region spanning 2 to 50 is the F-box domain; the sequence is DKISGFSDDELLVKILSFLPFKFAITTSVLSKQWKFLWMRVPKLEYDED. 6 LRR repeats span residues 27-52, 81-107, 158-185, 186-211, 252-279, and 328-354; these read TTSVLSKQWKFLWMRVPKLEYDEDSM, GHRMRSFIEKNLPLHSSPVIESLRLKF, TLKLRNNILVDVPHVFSLPSLKILHLER, VTYGDGESLQRLLSNCSVLEDLVVEL, YFKLTDLSKTFSGLIENMPKLEEANITA, and IHNAYWSELLYWLLKASPKLQNLEFDE. Residues 368-418 form the FBD domain; that stretch reads FWNQPNSVPQCLLSTLQTFEWSGYPGSVQGKDLATYILRKSRQLKIATISI.

This Arabidopsis thaliana (Mouse-ear cress) protein is Putative F-box/FBD/LRR-repeat protein At5g62970.